A 190-amino-acid polypeptide reads, in one-letter code: Nascent polypeptide-associated complex subunit alpha (190 aa).

Disordered regions lie at residues 20–42 and 123–155; these read FDSD…AERK and SLQN…VDAK. The segment covering 30–40 has biased composition (basic and acidic residues); that stretch reads HASDKVASRAE. Positions 37-102 constitute an NAC-A/B domain; that stretch reads SRAERKSRKA…AKAEDMSQLA (66 aa). Residues 138 to 151 show a composition bias toward acidic residues; sequence EEEEDDDSPIDEEG. Residues 152–189 enclose the UBA domain; it reads VDAKDIDLVMQQVSCSRRKAVKALKESNGDLINAIMNA.

The protein belongs to the NAC-alpha family. In terms of assembly, part of the nascent polypeptide-associated complex (NAC), consisting of EGD2 and EGD1. NAC associates with ribosomes via EGD1.

It localises to the cytoplasm. Its subcellular location is the nucleus. Its function is as follows. Component of the nascent polypeptide-associated complex (NAC), a dynamic component of the ribosomal exit tunnel, protecting the emerging polypeptides from interaction with other cytoplasmic proteins to ensure appropriate nascent protein targeting. The NAC complex also promotes mitochondrial protein import by enhancing productive ribosome interactions with the outer mitochondrial membrane and blocks the inappropriate interaction of ribosomes translating non-secretory nascent polypeptides with translocation sites in the membrane of the endoplasmic reticulum. EGD2 may also be involved in transcription regulation. This Mycosarcoma maydis (Corn smut fungus) protein is Nascent polypeptide-associated complex subunit alpha (EGD2).